The primary structure comprises 198 residues: Na(+)-translocating NADH-quinone reductase subunit E (198 aa).

6 helical membrane-spanning segments follow: residues 11–31, 39–59, 77–97, 110–130, 140–160, and 176–196; these read SIFI…FLAV, FGLG…NNLV, FLNF…LEMI, GIFL…SFMV, VVYG…LAGI, and LGIT…FSGV.

Belongs to the NqrDE/RnfAE family. As to quaternary structure, composed of six subunits; NqrA, NqrB, NqrC, NqrD, NqrE and NqrF.

It is found in the cell inner membrane. It catalyses the reaction a ubiquinone + n Na(+)(in) + NADH + H(+) = a ubiquinol + n Na(+)(out) + NAD(+). In terms of biological role, NQR complex catalyzes the reduction of ubiquinone-1 to ubiquinol by two successive reactions, coupled with the transport of Na(+) ions from the cytoplasm to the periplasm. NqrA to NqrE are probably involved in the second step, the conversion of ubisemiquinone to ubiquinol. This Vibrio vulnificus (strain CMCP6) protein is Na(+)-translocating NADH-quinone reductase subunit E.